The following is a 119-amino-acid chain: Ribonuclease P protein component (119 aa).

The protein belongs to the RnpA family. As to quaternary structure, consists of a catalytic RNA component (M1 or rnpB) and a protein subunit.

The enzyme catalyses Endonucleolytic cleavage of RNA, removing 5'-extranucleotides from tRNA precursor.. Its function is as follows. RNaseP catalyzes the removal of the 5'-leader sequence from pre-tRNA to produce the mature 5'-terminus. It can also cleave other RNA substrates such as 4.5S RNA. The protein component plays an auxiliary but essential role in vivo by binding to the 5'-leader sequence and broadening the substrate specificity of the ribozyme. This chain is Ribonuclease P protein component, found in Dictyoglomus turgidum (strain DSM 6724 / Z-1310).